Reading from the N-terminus, the 392-residue chain is Protein FAM53C (392 aa).

At M1 the chain carries N-acetylmethionine. A disordered region spans residues 77–120; the sequence is HLRPPSRGSSPKEQPLSQVLRPEPPDPEKLPVPPAPPSKRHCRS. A compositionally biased stretch (polar residues) spans 83–93; that stretch reads RGSSPKEQPLS. Phosphoserine is present on residues S122 and S162. 3 disordered regions span residues 141 to 167, 203 to 303, and 340 to 364; these read LWTPIKHRGSGGGGGPQVPHQSPPKRV, SRPC…LDFD, and SASCSPTGGSSQVLSESEEEEEGAV. Residues 203–215 are compositionally biased toward polar residues; sequence SRPCATSPQSGSW. Phosphoserine is present on residues S232, S234, S255, S273, and S299. A compositionally biased stretch (low complexity) spans 241–256; the sequence is ASRFLPSARSSPASSP. Positions 278 to 303 are enriched in basic and acidic residues; that stretch reads LDARKTGVKRRHEEDPRRLRPSLDFD.

It belongs to the FAM53 family.

The protein is Protein FAM53C of Pongo abelii (Sumatran orangutan).